The chain runs to 492 residues: Aerolysin (492 aa).

A signal peptide spans 1–21 (MKALKITGLSLIISATLAAQT). 2 cysteine pairs are disulfide-bonded: Cys42–Cys98 and Cys182–Cys187. The segment at 68–84 (WQISGLANNWVILGPGY) is interaction with host N-linked glycan. The interval 256-288 (YGLSEKVSTKNKFKWPLVGETEVSIEIAANQSW) is part of the transmembrane beta-barrel after proteolytic activation of the toxin and insertion into the host membrane. The tract at residues 346–355 (RWGGNAWHTH) is interaction with glycans from host GPI-anchor. Positions 446–492 (GSDSKVRRTRSVDGANTGLKLDIPLDAQELAELGFENVTLSVTPARN) are excised as a propeptide.

It belongs to the aerolysin family. Homodimer in solution; homoheptamer in the host membrane. After binding to GPI-anchored proteins in target membranes and proteolytic removal of the C-terminal propeptide, the protein assembles into a heptameric pre-pore complex. A further conformation change leads to insertion into the host membrane. In terms of processing, proteolytic cleavage and subsequent release of the propeptide trigger a major conformation change, leading to the formation of a heptameric pre-pore that then inserts into the host membrane.

The protein localises to the secreted. It is found in the host cell membrane. In terms of biological role, secreted, cytolytic toxin that forms pores in host membranes after proteolytic removal of a C-terminal propeptide, leading to destruction of the membrane permeability barrier and cell death. The pores are formed by transmembrane beta-strands and are approximately 3 nm in diameter. The polypeptide is Aerolysin (aerA) (Aeromonas enteropelogenes (Aeromonas trota)).